We begin with the raw amino-acid sequence, 147 residues long: Hemoglobin subunit epsilon (147 aa).

The Globin domain maps to His-3–His-147. Ser-14 and Ser-51 each carry phosphoserine. His-64 and His-93 together coordinate heme b.

The protein belongs to the globin family. In terms of assembly, heterotetramer of two alpha chains and two epsilon chains in early embryonic hemoglobin Gower-2; two zeta chains and two epsilon chains in early embryonic hemoglobin Gower-1. In terms of tissue distribution, red blood cells.

In terms of biological role, the epsilon chain is a beta-type chain of early mammalian embryonic hemoglobin. The chain is Hemoglobin subunit epsilon (HBE1) from Ateles belzebuth (White-bellied spider monkey).